The chain runs to 232 residues: Ubiquinone biosynthesis O-methyltransferase (232 aa).

S-adenosyl-L-methionine is bound by residues Arg-36, Gly-55, Asp-76, and Met-120.

It belongs to the methyltransferase superfamily. UbiG/COQ3 family.

It carries out the reaction a 3-demethylubiquinol + S-adenosyl-L-methionine = a ubiquinol + S-adenosyl-L-homocysteine + H(+). The enzyme catalyses a 3-(all-trans-polyprenyl)benzene-1,2-diol + S-adenosyl-L-methionine = a 2-methoxy-6-(all-trans-polyprenyl)phenol + S-adenosyl-L-homocysteine + H(+). The protein operates within cofactor biosynthesis; ubiquinone biosynthesis. In terms of biological role, O-methyltransferase that catalyzes the 2 O-methylation steps in the ubiquinone biosynthetic pathway. The chain is Ubiquinone biosynthesis O-methyltransferase from Paraburkholderia phymatum (strain DSM 17167 / CIP 108236 / LMG 21445 / STM815) (Burkholderia phymatum).